A 448-amino-acid chain; its full sequence is Phosphoglucosamine mutase (448 aa).

Ser-100 functions as the Phosphoserine intermediate in the catalytic mechanism. Mg(2+) contacts are provided by Ser-100, Asp-240, Asp-242, and Asp-244. Position 100 is a phosphoserine (Ser-100).

The protein belongs to the phosphohexose mutase family. Mg(2+) serves as cofactor. Activated by phosphorylation.

It carries out the reaction alpha-D-glucosamine 1-phosphate = D-glucosamine 6-phosphate. Catalyzes the conversion of glucosamine-6-phosphate to glucosamine-1-phosphate. In Bacillus cereus (strain ATCC 10987 / NRS 248), this protein is Phosphoglucosamine mutase.